The following is a 991-amino-acid chain: Toll-like receptor 13 (991 aa).

The first 68 residues, 1-68, serve as a signal peptide directing secretion; sequence MSGLYRILVQ…GFSLPPVAET (68 aa). Topologically, residues 69 to 783 are extracellular; sequence YGFNKCTQYE…DAMCNFDLGK (715 aa). Asn93, Asn109, and Asn125 each carry an N-linked (GlcNAc...) asparagine glycan. LRR repeat units lie at residues 104-125, 128-149, 152-174, 175-196, 199-220, 225-246, 248-268, 271-292, 295-315, 318-338, 348-368, 372-394, 397-418, 421-442, 445-466, 469-490, 493-514, 517-538, 541-562, 565-585, 594-617, 620-641, 644-665, 672-693, and 696-716; these read YTTHLNLTHNEIQVLPPWSFTN, ALVDLRLEWNSIWKIDEGAFRG, NLTLLNLVENKIQSVNNSFEGLS, SLKTLLLSHNQITHIHKDAFTP, KLKYLSLSRNNISDFSGILEAV, CLERLDLTNNSIMYLDHSPRSL, SLTHLSFEGNKLRELNFSALS, NLTNLSASRNGNKVIQNVYLKT, QLKSLNLSGTVIKLENLSAKH, NLRAMDLSNWELRHGHLDMKT, KLETLVFQKNVTNAEGIKQLA, RLLFLDLGQNSDLIYLNDSEFNA, SLQKLNLNKCQLSFINNRTWSS, NLTSLDLSHNKFKSFPDFAFSP, HLEFLSLSRNPITELNNLAFSG, ALKELNLAACWIVTIDRYSFTQ, NLEVLDLGDNNIRTLNHGTFRP, KLQSLILSHNCLKILEPNSFSG, NLRSLDLMYNSLSYFHEHLFSG, KLLILKLGFNKITYETTRTLQ, SLKQLNLEGQRHGIQVVPSNFFQG, SLQELLLGKNPSVFLDHHQFDP, NLTKLDISGTKDGDRSLYLNAS, RLKILRLENNNLESLVPDMFSS, and SLQVFSLRFNNLKVINQSHLK. Residues Asn152 and Asn167 are each glycosylated (N-linked (GlcNAc...) asparagine). 7 N-linked (GlcNAc...) asparagine glycosylation sites follow: Asn209, Asn233, Asn263, Asn271, Asn274, Asn300, and Asn310. N-linked (GlcNAc...) asparagine glycans are attached at residues Asn357, Asn388, Asn413, and Asn421. Residues Asn644 and Asn663 are each glycosylated (N-linked (GlcNAc...) asparagine). Asn711 and Asn742 each carry an N-linked (GlcNAc...) asparagine glycan. The region spanning 729–779 is the LRRCT domain; that stretch reads NKLQCTCDNLWFKNWSMNTEEVHIPFLRSYPCQQPGSQSLLIDFDDAMCNF. A helical membrane pass occupies residues 784 to 804; that stretch reads VYFLCSFSMVLSTMVFSWFST. Residues 805–991 are Cytoplasmic-facing; it reads KMIASLWYGL…KENTHLIVVE (187 aa). Residues 832–975 enclose the TIR domain; it reads FLYDAFVSFS…LFWARIRNAL (144 aa).

The protein belongs to the Toll-like receptor family. Binds MYD88 via their respective TIR domains. Interacts with UNC93B1.

It localises to the endosome membrane. Component of innate and adaptive immunity that recognizes and binds 23S rRNA from bacteria. TLRs (Toll-like receptors) control host immune response against pathogens through recognition of molecular patterns specific to microorganisms. Acts via MYD88 and TRAF6, leading to NF-kappa-B activation, cytokine secretion and the inflammatory response. Specifically binds the 5'-CGGAAAGACC-3' sequence on bacterial 23S rRNA, a sequence also bound by MLS group antibiotics (including erythromycin). May also recognize vesicular stomatitis virus; however, these data require additional evidences. The protein is Toll-like receptor 13 (Tlr13) of Mus musculus (Mouse).